Reading from the N-terminus, the 426-residue chain is MDLTGGFGARSGGVGPCREPIGLESLHLGDEFRQLVTTLPPENPGGSFTALLELPPTQAVELLHFTDSSSSQQAAVTGIGGEIPPPLHSFGGTLAFPSNSVLMERAARFSVIATEQQNGNISGETPTSSVPSNSSANLDRVKTEPAETDSSQRLISDSAIENQIPCPNQNNRNGKRKDFEKKGKSSTKKNKSSEENEKLPYVHVRARRGQATDSHSLAERARREKINARMKLLQELVPGCDKGTDFGGKIKIKVCFGVHLLMISGKKVAIFLWKVSCEDLIDCSFSPPRIQGTALVLDEIINHVQSLQRQVEMLSMRLAAVNPRIDFNLDTILASENGSLMDGSFNAAPMQLAWPQQAIETEQSFHHRQLQQPPTQQWPFDGLNQPVWGREEDQAHGNDNSNLMAVSENVMVASANLHPNQVKMEL.

Polar residues-rich tracts occupy residues 117–137 and 148–172; these read QNGNISGETPTSSVPSNSSAN and TDSSQRLISDSAIENQIPCPNQNNR. The interval 117-201 is disordered; sequence QNGNISGETP…SSEENEKLPY (85 aa). The span at 191 to 200 shows a compositional bias: basic and acidic residues; that stretch reads KSSEENEKLP. One can recognise a bHLH domain in the interval 210–307; the sequence is QATDSHSLAE…DEIINHVQSL (98 aa). A disordered region spans residues 367–398; that stretch reads HRQLQQPPTQQWPFDGLNQPVWGREEDQAHGN.

As to quaternary structure, homodimer. Expressed constitutively in roots, leaves, stems, and flowers.

It localises to the nucleus. This chain is Transcription factor bHLH60 (BHLH60), found in Arabidopsis thaliana (Mouse-ear cress).